The chain runs to 282 residues: Digeranylgeranylglyceryl phosphate synthase (282 aa).

The next 9 membrane-spanning stretches (helical) occupy residues 15–35, 36–56, 81–100, 104–121, 131–151, 159–179, 201–221, 222–242, and 260–280; these read VIGAALGAIMGFLVSSQWYLE, LKGILLSALVVGLIAAGGYVI, VNKAKALSIALFIIGIALSI, IYALVIALVTAIGLIYYA, GNLLVATTTALSIFYGGLAFF, IIIPTLYAFFLTLIREIVKGI, KSWRIAKILLVLLLIISPLPF, FIGFNLIYLILLILVFIPFTI, and YLKISAISGIIAFLLGSLPFF.

It belongs to the UbiA prenyltransferase family. DGGGP synthase subfamily. Mg(2+) is required as a cofactor. Requires Ca(2+) as cofactor.

The protein resides in the cell membrane. It carries out the reaction sn-3-O-(geranylgeranyl)glycerol 1-phosphate + (2E,6E,10E)-geranylgeranyl diphosphate = 2,3-bis-O-(geranylgeranyl)-sn-glycerol 1-phosphate + diphosphate. It functions in the pathway membrane lipid metabolism; glycerophospholipid metabolism. Its activity is regulated as follows. Inhibited by EDTA in vitro. Functionally, prenyltransferase that catalyzes the transfer of the geranylgeranyl moiety of geranylgeranyl diphosphate (GGPP) to the C2 hydroxyl of (S)-3-O-geranylgeranylglyceryl phosphate (GGGP). This reaction is the second ether-bond-formation step in the biosynthesis of archaeal membrane lipids. Cannot use other prenyl donors, i.e. farnesyl diphosphate (FPP) and phytyl diphosphate. Moreover, 4-hydroxybenzoate, 1,4-dihydroxy 2-naphthoate, homogentisate, and alpha-glycerophosphate do not function as prenyl acceptor substrates. This chain is Digeranylgeranylglyceryl phosphate synthase (ubiA-2), found in Saccharolobus solfataricus (strain ATCC 35092 / DSM 1617 / JCM 11322 / P2) (Sulfolobus solfataricus).